A 108-amino-acid polypeptide reads, in one-letter code: DNA-directed RNA polymerase III subunit RPC10 (108 aa).

Zn(2+)-binding residues include Cys-5, Cys-8, Cys-25, Cys-28, Cys-69, and Cys-72. Residues 5-28 form a C4-type zinc finger; it reads CPGCGNGLIVEEGQRCHRFACNTC. The TFIIS-type zinc finger occupies 65 to 107; it reads TAESCPKCEHPRAYFMQLQTRSADEPMTTFYKCCNAQCGHRWR. Positions 88-89 match the Hairpin motif; the sequence is DE. Positions 98 and 102 each coordinate Zn(2+).

The protein belongs to the archaeal RpoM/eukaryotic RPA12/RPB9/RPC11 RNA polymerase family. Component of the RNA polymerase III complex consisting of 17 subunits: a ten-subunit horseshoe-shaped catalytic core composed of POLR3A/RPC1, POLR3B/RPC2, POLR1C/RPAC1, POLR1D/RPAC2, POLR3K/RPC10, POLR2E/RPABC1, POLR2F/RPABC2, POLR2H/RPABC3, POLR2K/RPABC4 and POLR2L/RPABC5; a mobile stalk composed of two subunits POLR3H/RPC8 and CRCP/RPC9, protruding from the core and functioning primarily in transcription initiation; and additional subunits homologous to general transcription factors of the RNA polymerase II machinery, POLR3C/RPC3-POLR3F/RPC6-POLR3G/RPC7 heterotrimer required for transcription initiation and POLR3D/RPC4-POLR3E/RPC5 heterodimer involved in both transcription initiation and termination.

Its subcellular location is the nucleus. Core component of RNA polymerase III (Pol III) which synthesizes small non-coding RNAs using the four ribonucleoside triphosphates as substrates. Can mediate Pol I proofreading of the nascent RNA transcript. Anchors into the Pol III active site to constantly monitor transcription fidelity, cleaves mis-incorporated 5'-ribonucleotides and restarts the transcription process. Once Pol III reaches the poly(dT) termination signal, can induce Pol III clamp opening and transcription termination. Pol III plays an important role in sensing and limiting infection by intracellular bacteria and DNA viruses. Acts as a nuclear and cytosolic DNA sensor involved in innate immune response. Can sense non-self dsDNA that serves as template for transcription into dsRNA. The non-self RNA polymerase III transcripts, such as Epstein-Barr virus-encoded RNAs (EBERs) induce type I interferon and NF-kappa-B through the RIG-I pathway. This chain is DNA-directed RNA polymerase III subunit RPC10, found in Homo sapiens (Human).